A 118-amino-acid chain; its full sequence is Myotrophin (118 aa).

ANK repeat units follow at residues 1 to 30 (MSDK…DVNR), 34 to 65 (GGRK…NAPD), and 67 to 98 (HNIT…TVKG).

This sequence belongs to the myotrophin family.

The protein localises to the cytoplasm. Its subcellular location is the nucleus. It localises to the perinuclear region. Regulates NF-kappa-B transcription factor activity. Promotes growth of cardiomyocytes, but not cardiomyocyte proliferation. Promotes cardiac muscle hypertrophy. Plays a role in the regulation of the growth of actin filaments. Inhibits the activity of the F-actin-capping protein complex. The sequence is that of Myotrophin (MTPN) from Gallus gallus (Chicken).